Consider the following 115-residue polypeptide: Large ribosomal subunit protein P2y (115 aa).

The segment at 63 to 115 (ASVPSGGGGGVAVASATSGGGGGGGASAAESKKEEKKEEKEESDDDMGFSLFE) is disordered. Over residues 92 to 102 (ESKKEEKKEEK) the composition is skewed to basic and acidic residues. S105 is modified (phosphoserine).

This sequence belongs to the eukaryotic ribosomal protein P1/P2 family. P1 and P2 exist as dimers at the large ribosomal subunit. In terms of processing, phosphorylated.

Plays an important role in the elongation step of protein synthesis. This Arabidopsis thaliana (Mouse-ear cress) protein is Large ribosomal subunit protein P2y (RPP2B).